A 424-amino-acid chain; its full sequence is Probable ribonuclease FAU-1 (424 aa).

It belongs to the FAU-1 family.

Probable RNase involved in rRNA stability through maturation and/or degradation of precursor rRNAs. Binds to RNA in loop regions with AU-rich sequences. The chain is Probable ribonuclease FAU-1 from Saccharolobus solfataricus (strain ATCC 35092 / DSM 1617 / JCM 11322 / P2) (Sulfolobus solfataricus).